Reading from the N-terminus, the 395-residue chain is Carbamoyl phosphate synthase small chain (395 aa).

The tract at residues 1-192 is CPSase; that stretch reads MTYNLHPAIL…LQYKTDKMYG (192 aa). L-glutamine contacts are provided by serine 50, glycine 244, and glycine 246. In terms of domain architecture, Glutamine amidotransferase type-1 spans 196–383; that stretch reads KIILIDFGVK…INLIKHFKQY (188 aa). Cysteine 273 serves as the catalytic Nucleophile. Residues methionine 274, glutamine 277, asparagine 313, glycine 315, and phenylalanine 316 each coordinate L-glutamine. Catalysis depends on residues histidine 356 and glutamate 358.

This sequence belongs to the CarA family. Composed of two chains; the small (or glutamine) chain promotes the hydrolysis of glutamine to ammonia, which is used by the large (or ammonia) chain to synthesize carbamoyl phosphate. Tetramer of heterodimers (alpha,beta)4.

Its subcellular location is the plastid. It is found in the chloroplast. It catalyses the reaction hydrogencarbonate + L-glutamine + 2 ATP + H2O = carbamoyl phosphate + L-glutamate + 2 ADP + phosphate + 2 H(+). It carries out the reaction L-glutamine + H2O = L-glutamate + NH4(+). Its pathway is amino-acid biosynthesis; L-arginine biosynthesis; carbamoyl phosphate from bicarbonate: step 1/1. It functions in the pathway pyrimidine metabolism; UMP biosynthesis via de novo pathway; (S)-dihydroorotate from bicarbonate: step 1/3. Small subunit of the glutamine-dependent carbamoyl phosphate synthetase (CPSase). CPSase catalyzes the formation of carbamoyl phosphate from the ammonia moiety of glutamine, carbonate, and phosphate donated by ATP, constituting the first step of 2 biosynthetic pathways, one leading to arginine and/or urea and the other to pyrimidine nucleotides. The small subunit (glutamine amidotransferase) binds and cleaves glutamine to supply the large subunit with the substrate ammonia. This chain is Carbamoyl phosphate synthase small chain, found in Gracilaria tenuistipitata var. liui (Red alga).